A 508-amino-acid polypeptide reads, in one-letter code: Hydroxymethylglutaryl-CoA synthase, mitochondrial (508 aa).

A mitochondrion-targeting transit peptide spans 1–37; the sequence is MQRLLTPVKRILQLTRAVQETSLTPARLLPVAHQRFS. N6-succinyllysine is present on Lys52. (3S)-3-hydroxy-3-methylglutaryl-CoA contacts are provided by Glu80 and Ala81. Lys83 carries the N6-acetyllysine; alternate modification. Lys83 bears the N6-succinyllysine; alternate mark. The active-site Proton donor/acceptor is Glu132. (3S)-3-hydroxy-3-methylglutaryl-CoA contacts are provided by Cys166, Asn204, and Thr208. Catalysis depends on Cys166, which acts as the Acyl-thioester intermediate. Lys221 carries the N6-succinyllysine modification. Lys243 bears the N6-acetyllysine mark. The residue at position 256 (Lys256) is an N6-acetyllysine; alternate. Residue Lys256 is modified to N6-succinyllysine; alternate. (3S)-3-hydroxy-3-methylglutaryl-CoA contacts are provided by Ser258 and His301. The Proton donor/acceptor role is filled by His301. The residue at position 306 (Lys306) is an N6-acetyllysine. Lys310 is a binding site for (3S)-3-hydroxy-3-methylglutaryl-CoA. Residue Lys310 is modified to N6-acetyllysine; alternate. Position 310 is an N6-succinyllysine; alternate (Lys310). Lys333 bears the N6-succinyllysine mark. An N6-acetyllysine; alternate mark is found at Lys342, Lys350, Lys354, and Lys358. 4 positions are modified to N6-succinyllysine; alternate: Lys342, Lys350, Lys354, and Lys358. Asn380 and Ser414 together coordinate (3S)-3-hydroxy-3-methylglutaryl-CoA. Ser433 is modified (phosphoserine). Lys437 is subject to N6-acetyllysine. Ser440 is modified (phosphoserine). The residue at position 447 (Lys447) is an N6-acetyllysine; alternate. An N6-succinyllysine; alternate modification is found at Lys447. The residue at position 456 (Ser456) is a Phosphoserine. The residue at position 473 (Lys473) is an N6-acetyllysine; alternate. N6-succinyllysine; alternate is present on Lys473. A Phosphoserine modification is found at Ser477.

The protein belongs to the thiolase-like superfamily. HMG-CoA synthase family. In terms of assembly, homodimer. Succinylated. Desuccinylated by SIRT5. Succinylation, at least at Lys-83 and Lys-310, inhibits the enzymatic activity. As to expression, expression in liver is 200-fold higher than in any other tissue. Low expression in colon, kidney, testis, and pancreas. Very low expression in heart and skeletal muscle. Not detected in brain. In terms of tissue distribution, highest expression detected in heart and skeletal muscle.

It localises to the mitochondrion. The catalysed reaction is acetoacetyl-CoA + acetyl-CoA + H2O = (3S)-3-hydroxy-3-methylglutaryl-CoA + CoA + H(+). Its pathway is metabolic intermediate biosynthesis; (R)-mevalonate biosynthesis; (R)-mevalonate from acetyl-CoA: step 2/3. Functionally, catalyzes the first irreversible step in ketogenesis, condensing acetyl-CoA to acetoacetyl-CoA to form HMG-CoA, which is converted by HMG-CoA reductase (HMGCR) into mevalonate. This chain is Hydroxymethylglutaryl-CoA synthase, mitochondrial (HMGCS2), found in Homo sapiens (Human).